We begin with the raw amino-acid sequence, 436 residues long: Gamma-glutamyl phosphate reductase (436 aa).

It belongs to the gamma-glutamyl phosphate reductase family.

Its subcellular location is the cytoplasm. It carries out the reaction L-glutamate 5-semialdehyde + phosphate + NADP(+) = L-glutamyl 5-phosphate + NADPH + H(+). Its pathway is amino-acid biosynthesis; L-proline biosynthesis; L-glutamate 5-semialdehyde from L-glutamate: step 2/2. Its function is as follows. Catalyzes the NADPH-dependent reduction of L-glutamate 5-phosphate into L-glutamate 5-semialdehyde and phosphate. The product spontaneously undergoes cyclization to form 1-pyrroline-5-carboxylate. This Polaromonas sp. (strain JS666 / ATCC BAA-500) protein is Gamma-glutamyl phosphate reductase.